The chain runs to 625 residues: Autophagy-related protein 13b (625 aa).

Low complexity-rich tracts occupy residues 322–332 and 455–477; these read PSVSCSPSPTR and PSGVRPSSSSSPRISFSRSSSRS. Disordered stretches follow at residues 322 to 388, 452 to 527, and 544 to 564; these read PSVS…AVPR, FRRP…YPKK, and PPLRQDVSESSRPEICSNNNK. The span at 498-518 shows a compositional bias: basic and acidic residues; it reads ITDRNSRPGSFDHRGDIHEPF.

This sequence belongs to the ATG13 family. Plant subfamily.

The protein localises to the cytoplasmic vesicle. It localises to the autophagosome. Its function is as follows. Involved in autophagy in a nutritional condition dependent manner. The ATG1-ATG13 protein kinase complex regulates downstream events required for autophagosome enclosure and/or vacuolar delivery. Becomes a target of autophagy under nutrient starvation. Connects autophagy to plant nutritional status. The chain is Autophagy-related protein 13b from Arabidopsis thaliana (Mouse-ear cress).